A 333-amino-acid chain; its full sequence is Lipoyl synthase (333 aa).

The disordered stretch occupies residues 1 to 29 (MTDSASGASAVANIATPSNEPYDATRKQK). [4Fe-4S] cluster is bound by residues cysteine 80, cysteine 85, cysteine 91, cysteine 106, cysteine 110, cysteine 113, and serine 320. A Radical SAM core domain is found at 91–309 (CFGKGTATFM…EEKAYEMGFT (219 aa)).

It belongs to the radical SAM superfamily. Lipoyl synthase family. [4Fe-4S] cluster serves as cofactor.

It localises to the cytoplasm. It catalyses the reaction [[Fe-S] cluster scaffold protein carrying a second [4Fe-4S](2+) cluster] + N(6)-octanoyl-L-lysyl-[protein] + 2 oxidized [2Fe-2S]-[ferredoxin] + 2 S-adenosyl-L-methionine + 4 H(+) = [[Fe-S] cluster scaffold protein] + N(6)-[(R)-dihydrolipoyl]-L-lysyl-[protein] + 4 Fe(3+) + 2 hydrogen sulfide + 2 5'-deoxyadenosine + 2 L-methionine + 2 reduced [2Fe-2S]-[ferredoxin]. Its pathway is protein modification; protein lipoylation via endogenous pathway; protein N(6)-(lipoyl)lysine from octanoyl-[acyl-carrier-protein]: step 2/2. Its function is as follows. Catalyzes the radical-mediated insertion of two sulfur atoms into the C-6 and C-8 positions of the octanoyl moiety bound to the lipoyl domains of lipoate-dependent enzymes, thereby converting the octanoylated domains into lipoylated derivatives. The sequence is that of Lipoyl synthase from Ralstonia nicotianae (strain ATCC BAA-1114 / GMI1000) (Ralstonia solanacearum).